The following is a 981-amino-acid chain: Ubiquitin carboxyl-terminal hydrolase 15 (981 aa).

Alanine 2 is modified (N-acetylalanine). The tract at residues 2–223 (AEGGAADLDT…KNEDGTWPRG (222 aa)) is mediates interaction with SART3. The DUSP domain occupies 7 to 118 (ADLDTQRSDI…GQEPIARKVV (112 aa)). The tract at residues 216–237 (EDGTWPRGPSTPKSPGASNFST) is disordered. Position 226 is a phosphothreonine (threonine 226). A compositionally biased stretch (polar residues) spans 226-237 (TPKSPGASNFST). Serine 229 and serine 242 each carry phosphoserine. Residues 289-933 (CGLSNLGNTC…AAYVLFYQRQ (645 aa)) form the USP domain. Catalysis depends on cysteine 298, which acts as the Nucleophile. Residue threonine 602 is modified to Phosphothreonine. The disordered stretch occupies residues 629–694 (GSLHCCKDQN…GGDNDSENGL (66 aa)). Positions 656–673 (METDEPDDESSQDQELPS) are enriched in acidic residues. Histidine 891 functions as the Proton acceptor in the catalytic mechanism. Residues 952–981 (SAATGIPLESDEDSNDNDNDIENENCMHTN) are disordered. The segment covering 960–974 (ESDEDSNDNDNDIEN) has biased composition (acidic residues). 2 positions are modified to phosphoserine: serine 961 and serine 965.

The protein belongs to the peptidase C19 family. In terms of assembly, a homodimer structure has been reported; however it is unclear whether the protein form a homodimer in vivo. Identified in a complex with the COP9 signalosome complex (CSN). Interacts with SMAD1, SMAD2 and SMAD3; the interaction is direct. Forms a complex with SMURF2 and SMAD7. Interacts with TGFBR1. Interacts with SART3; the interaction is direct. May interact with RNF20 and RNF40. May interact with PRKN. Interacts with INCA1. (Microbial infection) Interacts with human papillomavirus type 16 protein E6. In terms of processing, phosphorylated. Phosphorylation protects against ubiquitination and subsequent degradation by the proteasome. Post-translationally, ubiquitinated, leading to degradation by the proteasome. In terms of tissue distribution, expressed in skeletal muscle, kidney, heart, placenta, liver, thymus, lung, and ovary, with little or no expression in other tissues.

It localises to the cytoplasm. Its subcellular location is the nucleus. It is found in the mitochondrion. The catalysed reaction is Thiol-dependent hydrolysis of ester, thioester, amide, peptide and isopeptide bonds formed by the C-terminal Gly of ubiquitin (a 76-residue protein attached to proteins as an intracellular targeting signal).. In terms of biological role, hydrolase that removes conjugated ubiquitin from target proteins and regulates various pathways such as the TGF-beta receptor signaling, NF-kappa-B and RNF41/NRDP1-PRKN pathways. Acts as a key regulator of TGF-beta receptor signaling pathway, but the precise mechanism is still unclear: according to a report, acts by promoting deubiquitination of monoubiquitinated R-SMADs (SMAD1, SMAD2 and/or SMAD3), thereby alleviating inhibition of R-SMADs and promoting activation of TGF-beta target genes. According to another reports, regulates the TGF-beta receptor signaling pathway by mediating deubiquitination and stabilization of TGFBR1, leading to an enhanced TGF-beta signal. Able to mediate deubiquitination of monoubiquitinated substrates, 'Lys-27'-, 'Lys-48'- and 'Lys-63'-linked polyubiquitin chains. May also regulate gene expression and/or DNA repair through the deubiquitination of histone H2B. Acts as an inhibitor of mitophagy by counteracting the action of parkin (PRKN): hydrolyzes cleavage of 'Lys-48'- and 'Lys-63'-linked polyubiquitin chains attached by parkin on target proteins such as MFN2, thereby reducing parkin's ability to drive mitophagy. Acts as an associated component of COP9 signalosome complex (CSN) and regulates different pathways via this association: regulates NF-kappa-B by mediating deubiquitination of NFKBIA and deubiquitinates substrates bound to VCP. Involved in endosome organization by mediating deubiquitination of SQSTM1: ubiquitinated SQSTM1 forms a molecular bridge that restrains cognate vesicles in the perinuclear region and its deubiquitination releases target vesicles for fast transport into the cell periphery. Acts as a negative regulator of antifungal immunity by mediating 'Lys-27'-linked deubiquitination of CARD9, thereby inactivating CARD9. Functionally, (Microbial infection) Protects APC and human papillomavirus type 16 protein E6 against degradation via the ubiquitin proteasome pathway. This chain is Ubiquitin carboxyl-terminal hydrolase 15, found in Homo sapiens (Human).